The primary structure comprises 99 residues: Prostate and testis expressed protein 14 (99 aa).

The first 21 residues, 1–21, serve as a signal peptide directing secretion; it reads MEKYLLLLLLGIFLRVGFLQA. The 78-residue stretch at 22-99 folds into the UPAR/Ly6 domain; it reads LTCVSCGRLN…CDHQNLCNKP (78 aa). 5 disulfide bridges follow: C24/C51, C27/C36, C43/C69, C73/C89, and C90/C96. N31 carries an N-linked (GlcNAc...) asparagine glycan. Residue N75 is glycosylated (N-linked (GlcNAc...) asparagine).

Belongs to the PATE family. In terms of assembly, monomer. In terms of processing, glycosylated. In terms of tissue distribution, predominantly expressed in the seminal vesicles. Expressed in prostate, and to a lesser extent in the cauda epididymis.

It is found in the secreted. The sequence is that of Prostate and testis expressed protein 14 from Mus musculus (Mouse).